The sequence spans 568 residues: Sulfite reductase [NADPH] hemoprotein beta-component (568 aa).

The [4Fe-4S] cluster site is built by Cys426, Cys432, Cys471, and Cys475. Cys475 contacts siroheme.

This sequence belongs to the nitrite and sulfite reductase 4Fe-4S domain family. Alpha(8)-beta(8). The alpha component is a flavoprotein, the beta component is a hemoprotein. The cofactor is siroheme. It depends on [4Fe-4S] cluster as a cofactor.

It catalyses the reaction hydrogen sulfide + 3 NADP(+) + 3 H2O = sulfite + 3 NADPH + 4 H(+). It participates in sulfur metabolism; hydrogen sulfide biosynthesis; hydrogen sulfide from sulfite (NADPH route): step 1/1. Functionally, component of the sulfite reductase complex that catalyzes the 6-electron reduction of sulfite to sulfide. This is one of several activities required for the biosynthesis of L-cysteine from sulfate. This Xylella fastidiosa (strain M12) protein is Sulfite reductase [NADPH] hemoprotein beta-component.